Here is a 347-residue protein sequence, read N- to C-terminus: MDLQTQLQELKTSTQAKLAEMRGEHSKELQELRVAVLGKKGSLTELLKGLKDLPSEERPTVGKMVNEVRDVLTEAFDEAAKVVEAAKIQAQLDSESLDVTLPGRQVNLGNRHILSQIAEEIEDIFLGMGFQIVDGFEVETDYYNFERMNLPKDHPARDMQDTFYITEEILLRTHTSPVQARTLDKHDFSKGPLKMISPGRVFRRDTDDATHSHQFHQIEGLVVGKNISMGDLKGTLEMIIQKMFGAERRIRLRPSYFPFTEPSVEVDVSCFKCGGKGCNVCKNTGWIEILGAGMVHPQVLEMSGVDSEEYSGFAFGLGQERIAMLRYGINDIRGFYQGDVRFSEQFK.

Residue E261 coordinates Mg(2+).

It belongs to the class-II aminoacyl-tRNA synthetase family. Phe-tRNA synthetase alpha subunit type 1 subfamily. In terms of assembly, tetramer of two alpha and two beta subunits. Mg(2+) is required as a cofactor.

The protein resides in the cytoplasm. It catalyses the reaction tRNA(Phe) + L-phenylalanine + ATP = L-phenylalanyl-tRNA(Phe) + AMP + diphosphate + H(+). This chain is Phenylalanine--tRNA ligase alpha subunit, found in Streptococcus thermophilus (strain ATCC BAA-491 / LMD-9).